A 446-amino-acid chain; its full sequence is MITIKKGLDLPIAGKPEQVIHNGNAVKEVALLGEEYVGMRPSMKVREGDVVKKGQVLFEDKKNPGIVFTAPASGTVTAINRGAKRVLQSVVIKVEGNEQITFTQYNEDELKKLTSDQVRQNLQSSGLWTALRTRPFSKVPASDAVPSSIFVNAMDTNPLSANPEIVLKEHWQDFTDGLTVLSRLHEGKLHLCKAGDSNIPTIDLPNLAVHDFSGPHPAGLSGTHIHFIDPVSVTKSVWYLNYQDVIAIGKLFTTGEIYTDRVVSLAGPQVKNPRLIRTQLGANLSHLTENELSAGENRVISGSVLSGNTAIGPYNYLGRYALQVSVIAEGREKEFLGWIMPGKNKFSITRTVLGHFSSKLFNFTSAVNGGHRAMVPIGAYERVVPLDIIPTLLLRDLASGDTDSAQALGCLELDEEDLALCTFVCPGKNEYGPMLRAALDKIEKEG.

This sequence belongs to the NqrA family. Composed of six subunits; NqrA, NqrB, NqrC, NqrD, NqrE and NqrF.

It catalyses the reaction a ubiquinone + n Na(+)(in) + NADH + H(+) = a ubiquinol + n Na(+)(out) + NAD(+). In terms of biological role, NQR complex catalyzes the reduction of ubiquinone-1 to ubiquinol by two successive reactions, coupled with the transport of Na(+) ions from the cytoplasm to the periplasm. NqrA to NqrE are probably involved in the second step, the conversion of ubisemiquinone to ubiquinol. The protein is Na(+)-translocating NADH-quinone reductase subunit A of Histophilus somni (strain 129Pt) (Haemophilus somnus).